Here is a 354-residue protein sequence, read N- to C-terminus: Selenide, water dikinase (354 aa).

The active site involves Cys-23. ATP is bound by residues Lys-26 and 54-56; that span reads TSD. Asp-57 contacts Mg(2+). Residues Asp-74, Asp-97, and 145–147 each bind ATP; that span reads GHS. Asp-97 is a binding site for Mg(2+). Mg(2+) is bound at residue Asp-233.

This sequence belongs to the selenophosphate synthase 1 family. Class I subfamily. In terms of assembly, homodimer. Mg(2+) is required as a cofactor.

The enzyme catalyses hydrogenselenide + ATP + H2O = selenophosphate + AMP + phosphate + 2 H(+). Synthesizes selenophosphate from selenide and ATP. In Burkholderia cenocepacia (strain ATCC BAA-245 / DSM 16553 / LMG 16656 / NCTC 13227 / J2315 / CF5610) (Burkholderia cepacia (strain J2315)), this protein is Selenide, water dikinase.